A 545-amino-acid polypeptide reads, in one-letter code: CTP synthase (545 aa).

Positions 1-266 (MTTRYIFVTG…DDLVVKRFGL (266 aa)) are amidoligase domain. S14 contacts CTP. Residue S14 coordinates UTP. Residues 15 to 20 (SLGKGI) and D72 each bind ATP. Mg(2+) is bound by residues D72 and E140. CTP contacts are provided by residues 147 to 149 (DIE), 187 to 192 (KTKPTQ), and K223. UTP contacts are provided by residues 187–192 (KTKPTQ) and K223. 239–241 (KDV) is an ATP binding site. Residues 291-542 (VIGMVGKYIE…IAAASAHQKR (252 aa)) enclose the Glutamine amidotransferase type-1 domain. G352 contributes to the L-glutamine binding site. Residue C379 is the Nucleophile; for glutamine hydrolysis of the active site. Residues 380-383 (LGMQ), E403, and R470 contribute to the L-glutamine site. Catalysis depends on residues H515 and E517.

The protein belongs to the CTP synthase family. In terms of assembly, homotetramer.

The enzyme catalyses UTP + L-glutamine + ATP + H2O = CTP + L-glutamate + ADP + phosphate + 2 H(+). It carries out the reaction L-glutamine + H2O = L-glutamate + NH4(+). It catalyses the reaction UTP + NH4(+) + ATP = CTP + ADP + phosphate + 2 H(+). It functions in the pathway pyrimidine metabolism; CTP biosynthesis via de novo pathway; CTP from UDP: step 2/2. Allosterically activated by GTP, when glutamine is the substrate; GTP has no effect on the reaction when ammonia is the substrate. The allosteric effector GTP functions by stabilizing the protein conformation that binds the tetrahedral intermediate(s) formed during glutamine hydrolysis. Inhibited by the product CTP, via allosteric rather than competitive inhibition. In terms of biological role, catalyzes the ATP-dependent amination of UTP to CTP with either L-glutamine or ammonia as the source of nitrogen. Regulates intracellular CTP levels through interactions with the four ribonucleotide triphosphates. In Shewanella baltica (strain OS155 / ATCC BAA-1091), this protein is CTP synthase.